The chain runs to 378 residues: Spermidine/putrescine import ATP-binding protein PotA (378 aa).

An ABC transporter domain is found at 18–248 (VLLSGISKSF…PKNLFVAGFI (231 aa)). Position 50-57 (50-57 (GPSGCGKT)) interacts with ATP.

It belongs to the ABC transporter superfamily. Spermidine/putrescine importer (TC 3.A.1.11.1) family. The complex is composed of two ATP-binding proteins (PotA), two transmembrane proteins (PotB and PotC) and a solute-binding protein (PotD).

The protein localises to the cell inner membrane. The catalysed reaction is ATP + H2O + polyamine-[polyamine-binding protein]Side 1 = ADP + phosphate + polyamineSide 2 + [polyamine-binding protein]Side 1.. In terms of biological role, part of the ABC transporter complex PotABCD involved in spermidine/putrescine import. Responsible for energy coupling to the transport system. The chain is Spermidine/putrescine import ATP-binding protein PotA from Salmonella paratyphi A (strain ATCC 9150 / SARB42).